The chain runs to 248 residues: Granzyme-like protein 2 (248 aa).

The signal sequence occupies residues 1–18 (MFLFLIFLVAVLPVNTEG). A propeptide spans 19–20 (GE) (activation peptide). One can recognise a Peptidase S1 domain in the interval 21-243 (IVWGTESKPH…FIPWIQKTMK (223 aa)). A disulfide bridge links C50 with C66. Catalysis depends on charge relay system residues H65 and D108. 2 disulfides stabilise this stretch: C142–C207 and C172–C186. Residues N152 and N180 are each glycosylated (N-linked (GlcNAc...) asparagine). Residue S201 is the Charge relay system of the active site.

Belongs to the peptidase S1 family. Granzyme subfamily. As to expression, duodenum, lung and spleen.

This enzyme is necessary for target cell lysis in cell-mediated immune responses. In Rattus norvegicus (Rat), this protein is Granzyme-like protein 2.